The following is a 574-amino-acid chain: High-affinity methionine permease (574 aa).

Residues 1 to 61 (MSEGRTFLSQ…TELDQGEKQL (61 aa)) are Cytoplasmic-facing. A Glycyl lysine isopeptide (Lys-Gly) (interchain with G-Cter in ubiquitin) cross-link involves residue K28. Residues 62 to 82 (GILSCIGLICNRMLGTGVFAV) form a helical membrane-spanning segment. The Extracellular portion of the chain corresponds to 83–92 (SSTIYTLCGS). A helical transmembrane segment spans residues 93-113 (VGLALIMWAVGAIIAISGLYV). The Cytoplasmic portion of the chain corresponds to 114–140 (YMEFGTAIPKNGGEKNYLEAIFRKPKF). The helical transmembrane segment at 141-161 (FITCMYAAYIFFLGWAAGNSI) threads the bilayer. The Extracellular portion of the chain corresponds to 162–182 (NTAIMFLTAADTEVTKWNQRG). The helical transmembrane segment at 183 to 203 (IGVAVVFFAFLINSLNVKIGL) threads the bilayer. Topologically, residues 204–207 (YLQN) are cytoplasmic. The chain crosses the membrane as a helical span at residues 208-228 (ILGIFKIGIVLFISITGWVAL). At 229–293 (GGGLKDGYQS…VRTLKIAGPT (65 aa)) the chain is on the extracellular side. A helical membrane pass occupies residues 294–314 (SMVFLAIIYIFVNIAYFAVVP). The Cytoplasmic segment spans residues 315–340 (KDKLISSKLILAADFFDIVFGGQAKR). Residues 341 to 361 (AAAALVGLSALGNVLSVIFSQ) form a helical membrane-spanning segment. Residues 362 to 418 (GRIIQQLGREGVLPFSNFFASSKPFNSPMVGLFQHFIVCTVTILAPPPGDAYLLVQN) are Extracellular-facing. A helical membrane pass occupies residues 419-439 (LISYPMNIINFAISAGLLWIY). Residues 440–455 (WQRRQGKIEWNPPIKA) are Cytoplasmic-facing. A helical membrane pass occupies residues 456-476 (GVFVTGFFTLSNLYLIIAPYV). Residues 477–490 (PPSNGESVYSSMPY) lie on the Extracellular side of the membrane. Residues 491–511 (WIHCVIAWGIFFFGGVYYVVW) form a helical membrane-spanning segment. Residues 512–574 (AQLLPRWGHY…HYKSEQEKSL (63 aa)) lie on the Cytoplasmic side of the membrane. Residue T552 is modified to Phosphothreonine. S573 carries the post-translational modification Phosphoserine.

To yeast low affinity methionine permease (MUP3).

The protein resides in the membrane. Its function is as follows. High affinity permease for methionine. This is High-affinity methionine permease (MUP1) from Saccharomyces cerevisiae (strain ATCC 204508 / S288c) (Baker's yeast).